We begin with the raw amino-acid sequence, 121 residues long: MARIAGVDIPRDKRVEVSLTYIYGVGPTRARTILAQTGVSPDIRVKDLEDGDLQKLRNAADDFTLEGDLRRQEGMALKRLQDIGCVRGRRHRMSLPVRGQRTRTNARTRRGARKTVAGKKK.

A disordered region spans residues valine 97 to lysine 121. Residues glutamine 100 to lysine 121 are compositionally biased toward basic residues.

The protein belongs to the universal ribosomal protein uS13 family. In terms of assembly, part of the 30S ribosomal subunit. Forms a loose heterodimer with protein S19. Forms two bridges to the 50S subunit in the 70S ribosome.

Its function is as follows. Located at the top of the head of the 30S subunit, it contacts several helices of the 16S rRNA. In the 70S ribosome it contacts the 23S rRNA (bridge B1a) and protein L5 of the 50S subunit (bridge B1b), connecting the 2 subunits; these bridges are implicated in subunit movement. Contacts the tRNAs in the A and P-sites. The chain is Small ribosomal subunit protein uS13 from Parasynechococcus marenigrum (strain WH8102).